Consider the following 201-residue polypeptide: Recombination protein RecR (201 aa).

The C4-type zinc finger occupies 56–71; that stretch reads CKICFNVSSDEVCQYC. The 96-residue stretch at 79-174 folds into the Toprim domain; it reads SMICVVEESK…TVSRLASGLP (96 aa).

It belongs to the RecR family.

Its function is as follows. May play a role in DNA repair. It seems to be involved in an RecBC-independent recombinational process of DNA repair. It may act with RecF and RecO. This Cutibacterium acnes (strain DSM 16379 / KPA171202) (Propionibacterium acnes) protein is Recombination protein RecR.